Here is an 857-residue protein sequence, read N- to C-terminus: Autoinducer 2 sensor kinase/phosphatase LuxQ (857 aa).

The next 2 helical transmembrane spans lie at 20-40 (IIFLVLGLITIGIFIQSYYFS) and 283-303 (LGLATSVVLMLMLSLAIRSWI). Residues 490–712 (KMSHEIRTPL…TFYLSIPVEK (223 aa)) form the Histidine kinase domain. Residue His493 is modified to Phosphohistidine; by autocatalysis. The 116-residue stretch at 735-850 (KVLLVEDNHT…ELHDELLHFK (116 aa)) folds into the Response regulatory domain. Asp784 is subject to 4-aspartylphosphate.

In terms of assembly, binds the complex formed by the autoinducer and LuxP.

It is found in the cell inner membrane. It catalyses the reaction ATP + protein L-histidine = ADP + protein N-phospho-L-histidine.. Functionally, at low cell density, in absence of autoinducer has a kinase activity, and autophosphorylates on a histidine residue. The phosphoryl group is then transferred to an aspartate residue in the response regulator domain. The phosphoryl group is transferred to LuxU, and ultimately to LuxO. At high cell density, in the presence of autoinducer, the kinase activity is inactivated, and the response regulator domain has a phosphatase activity. This Vibrio vulnificus (strain CMCP6) protein is Autoinducer 2 sensor kinase/phosphatase LuxQ (luxQ).